The following is a 395-amino-acid chain: LIM/homeobox protein Lhx3 (395 aa).

LIM zinc-binding domains follow at residues 28 to 78 (CAGC…CKED) and 87 to 141 (CAAC…CKAD). Positions 154–213 (AKRPRTTITAKQLETLKNAYNNSPKPARHVREQLSSETGLDMRVVQVWFQNRRAKEKRLK) form a DNA-binding region, homeobox. 2 disordered regions span residues 209–325 (EKRL…LQAL) and 348–395 (GGQG…HAQF). Residues 257-276 (DEPSMSEMSHSNGIYSNLSE) are compositionally biased toward polar residues.

The protein localises to the nucleus. In terms of biological role, transcription factor. Defines subclasses of motoneurons that segregate into columns in the spinal cord and select distinct axon pathways. Acts in conjunction with LIM-1, ISL-1 and ISL-2. This chain is LIM/homeobox protein Lhx3 (LHX3), found in Gallus gallus (Chicken).